The chain runs to 321 residues: Peroxidase 42 (321 aa).

Residues 1 to 29 (MATSSGSCLIISLLVVVVAAALSASTASA) form the signal peptide. Gln30 bears the Pyrrolidone carboxylic acid mark. Disulfide bonds link Cys40–Cys118, Cys73–Cys78, Cys124–Cys315, and Cys202–Cys227. Catalysis depends on His71, which acts as the Proton acceptor. Ca(2+)-binding residues include Asp72, Ile75, Gly77, Asp79, and Ser81. Asn85 and Asn96 each carry an N-linked (GlcNAc...) asparagine glycan. Pro165 provides a ligand contact to substrate. A heme b-binding site is contributed by His195. Residue Thr196 participates in Ca(2+) binding. A glycan (N-linked (GlcNAc...) asparagine) is linked at Asn211. Ca(2+) is bound by residues Asp239, Thr242, and Gly247. A glycan (N-linked (GlcNAc...) asparagine) is linked at Asn270.

It belongs to the peroxidase family. Classical plant (class III) peroxidase subfamily. It depends on heme b as a cofactor. The cofactor is Ca(2+).

It localises to the secreted. It catalyses the reaction 2 a phenolic donor + H2O2 = 2 a phenolic radical donor + 2 H2O. Removal of H(2)O(2), oxidation of toxic reductants, biosynthesis and degradation of lignin, suberization, auxin catabolism, response to environmental stresses such as wounding, pathogen attack and oxidative stress. These functions might be dependent on each isozyme/isoform in each plant tissue. This Zea mays (Maize) protein is Peroxidase 42 (PER42).